The sequence spans 193 residues: Peptide deformylase (193 aa).

Residues cysteine 111 and histidine 155 each coordinate Fe cation. The active site involves glutamate 156. Residue histidine 159 participates in Fe cation binding.

This sequence belongs to the polypeptide deformylase family. Fe(2+) is required as a cofactor.

It carries out the reaction N-terminal N-formyl-L-methionyl-[peptide] + H2O = N-terminal L-methionyl-[peptide] + formate. Functionally, removes the formyl group from the N-terminal Met of newly synthesized proteins. Requires at least a dipeptide for an efficient rate of reaction. N-terminal L-methionine is a prerequisite for activity but the enzyme has broad specificity at other positions. The protein is Peptide deformylase of Mycoplasma genitalium (strain ATCC 33530 / DSM 19775 / NCTC 10195 / G37) (Mycoplasmoides genitalium).